We begin with the raw amino-acid sequence, 442 residues long: MAAPSSRPESNPPLYKQALDFALDVANGRHALSKLIPPALFLVDALLCGLIIWKVPYTEIDWAAYMEQVSQILSGERDYTKVRGGTGPLVYPAAHVYIYTGLYHLTDEGRNILLAQQLFAGLYMVTLAVVMGCYWQAKAPPYLFPLLTLSKRLHSIFVLRCFNDCFAVLFLWLAIFFFQRRNWQAGALLYTLGLGVKMTLLLSLPAVGIVLFLGSGSFVTTLQLVATMGLVQILIGVPFLAHYPTEYLSRAFELSRQFFFKWTVNWRFVGEEIFLSKGFALTLLALHVLVLGIFITTRWIKPARKSLVQLISPVLLAGKPPLTVPEHRAAARDVTPRYIMTTILSANAVGLLFARSLHYQFYAYVAWSTPFLLWRAGLHPVLVYLLWAVHEWAWNVFPSTPASSAVVVGVLGVTVAGVWFGAREEWEPGMKSSSKKEEAAMR.

The Lumenal portion of the chain corresponds to 1 to 34; that stretch reads MAAPSSRPESNPPLYKQALDFALDVANGRHALSK. Residues 35-55 traverse the membrane as a helical segment; the sequence is LIPPALFLVDALLCGLIIWKV. Residues 56 to 84 lie on the Cytoplasmic side of the membrane; the sequence is PYTEIDWAAYMEQVSQILSGERDYTKVRG. A helical transmembrane segment spans residues 85–105; it reads GTGPLVYPAAHVYIYTGLYHL. Over 106-111 the chain is Lumenal; it reads TDEGRN. The chain crosses the membrane as a helical span at residues 112 to 132; it reads ILLAQQLFAGLYMVTLAVVMG. Residues 133-155 lie on the Cytoplasmic side of the membrane; the sequence is CYWQAKAPPYLFPLLTLSKRLHS. The chain crosses the membrane as a helical span at residues 156–176; that stretch reads IFVLRCFNDCFAVLFLWLAIF. Residues 177-198 are Lumenal-facing; it reads FFQRRNWQAGALLYTLGLGVKM. Residues 199–219 traverse the membrane as a helical segment; the sequence is TLLLSLPAVGIVLFLGSGSFV. Threonine 220 is a topological domain (cytoplasmic). Residues 221–241 traverse the membrane as a helical segment; that stretch reads TLQLVATMGLVQILIGVPFLA. At 242–272 the chain is on the lumenal side; the sequence is HYPTEYLSRAFELSRQFFFKWTVNWRFVGEE. A helical transmembrane segment spans residues 273-293; sequence IFLSKGFALTLLALHVLVLGI. The Cytoplasmic portion of the chain corresponds to 294-333; that stretch reads FITTRWIKPARKSLVQLISPVLLAGKPPLTVPEHRAAARD. A helical membrane pass occupies residues 334 to 354; the sequence is VTPRYIMTTILSANAVGLLFA. At 355 to 376 the chain is on the lumenal side; that stretch reads RSLHYQFYAYVAWSTPFLLWRA. A helical membrane pass occupies residues 377–397; it reads GLHPVLVYLLWAVHEWAWNVF. Over 398-401 the chain is Cytoplasmic; the sequence is PSTP. Residues 402–422 traverse the membrane as a helical segment; sequence ASSAVVVGVLGVTVAGVWFGA. Residues 423–442 are Lumenal-facing; it reads REEWEPGMKSSSKKEEAAMR.

The protein belongs to the glycosyltransferase ALG3 family.

Its subcellular location is the endoplasmic reticulum membrane. It catalyses the reaction an alpha-D-Man-(1-&gt;2)-alpha-D-Man-(1-&gt;2)-alpha-D-Man-(1-&gt;3)-[alpha-D-Man-(1-&gt;6)]-beta-D-Man-(1-&gt;4)-beta-D-GlcNAc-(1-&gt;4)-alpha-D-GlcNAc-diphospho-di-trans,poly-cis-dolichol + a di-trans,poly-cis-dolichyl beta-D-mannosyl phosphate = an alpha-D-Man-(1-&gt;2)-alpha-D-Man-(1-&gt;2)-alpha-D-Man-(1-&gt;3)-[alpha-D-Man-(1-&gt;3)-alpha-D-Man-(1-&gt;6)]-beta-D-Man-(1-&gt;4)-beta-D-GlcNAc-(1-&gt;4)-alpha-D-GlcNAc-diphospho-di-trans,poly-cis-dolichol + a di-trans,poly-cis-dolichyl phosphate + H(+). It functions in the pathway protein modification; protein glycosylation. Functionally, dol-P-Man:Man(5)GlcNAc(2)-PP-Dol alpha-1,3-mannosyltransferase that operates in the biosynthetic pathway of dolichol-linked oligosaccharides, the glycan precursors employed in protein asparagine (N)-glycosylation. The assembly of dolichol-linked oligosaccharides begins on the cytosolic side of the endoplasmic reticulum membrane and finishes in its lumen. The sequential addition of sugars to dolichol pyrophosphate produces dolichol-linked oligosaccharides containing fourteen sugars, including two GlcNAcs, nine mannoses and three glucoses. Once assembled, the oligosaccharide is transferred from the lipid to nascent proteins by oligosaccharyltransferases. In the lumen of the endoplasmic reticulum, adds the first dolichyl beta-D-mannosyl phosphate derived mannose in an alpha-1,3 linkage to Man(5)GlcNAc(2)-PP-dolichol to produce Man(6)GlcNAc(2)-PP-dolichol. In Neurospora crassa (strain ATCC 24698 / 74-OR23-1A / CBS 708.71 / DSM 1257 / FGSC 987), this protein is Dol-P-Man:Man(5)GlcNAc(2)-PP-Dol alpha-1,3-mannosyltransferase (alg-3).